Reading from the N-terminus, the 327-residue chain is Ribose-phosphate pyrophosphokinase (327 aa).

ATP-binding positions include 46–48 (NGE) and 105–106 (RQ). 2 residues coordinate Mg(2+): H139 and D179. K203 is an active-site residue. D-ribose 5-phosphate-binding positions include R205, D231, and 235-239 (DTGGT).

Belongs to the ribose-phosphate pyrophosphokinase family. Class I subfamily. As to quaternary structure, homohexamer. It depends on Mg(2+) as a cofactor.

It localises to the cytoplasm. It catalyses the reaction D-ribose 5-phosphate + ATP = 5-phospho-alpha-D-ribose 1-diphosphate + AMP + H(+). It participates in metabolic intermediate biosynthesis; 5-phospho-alpha-D-ribose 1-diphosphate biosynthesis; 5-phospho-alpha-D-ribose 1-diphosphate from D-ribose 5-phosphate (route I): step 1/1. In terms of biological role, involved in the biosynthesis of the central metabolite phospho-alpha-D-ribosyl-1-pyrophosphate (PRPP) via the transfer of pyrophosphoryl group from ATP to 1-hydroxyl of ribose-5-phosphate (Rib-5-P). The chain is Ribose-phosphate pyrophosphokinase from Mycobacterium leprae (strain TN).